Consider the following 24-residue polypeptide: Brevinin-1Bc (24 aa).

The cysteines at positions 18 and 24 are disulfide-linked.

As to expression, expressed by the skin glands.

The protein resides in the secreted. Its function is as follows. Antibacterial activity against Gram-positive bacterium S.aureus. This chain is Brevinin-1Bc, found in Lithobates berlandieri (Rio Grande leopard frog).